We begin with the raw amino-acid sequence, 158 residues long: Protein E6 (158 aa).

Zinc fingers lie at residues 32–68 (CVYCKTQLQQTEVYEFAFSDLFIVYRNGEPYAACQKC) and 105–141 (CMSCLKPLCPAEKLRHVNTKRRFHQIAGSYTGQCRHC). The PDZ-binding domain signature appears at 156-158 (TQV).

Belongs to the papillomaviridae E6 protein family. In terms of assembly, forms homodimers. Interacts with ubiquitin-protein ligase UBE3A/E6-AP and thus forms a complex with human TP53. Interacts with human NFX1 and MAGI3. Interacts with human IRF3; this interaction inhibits the establishment of antiviral state. Interacts with human TYK2; this interaction inhibits JAK-STAT activation by interferon alpha. Interacts with host DLG1; this interaction leads to the proteasomal degradation of DLG1.

The protein localises to the host cytoplasm. Its subcellular location is the host nucleus. Functionally, plays a major role in the induction and maintenance of cellular transformation. Acts mainly as an oncoprotein by stimulating the destruction of many host cell key regulatory proteins. E6 associates with host UBE3A/E6-AP ubiquitin-protein ligase, and inactivates tumor suppressors TP53 and TP73 by targeting them to the 26S proteasome for degradation. In turn, DNA damage and chromosomal instabilities increase and lead to cell proliferation and cancer development. The complex E6/E6AP targets several other substrates to degradation via the proteasome including host DLG1 or NFX1, a repressor of human telomerase reverse transcriptase (hTERT). The resulting increased expression of hTERT prevents the shortening of telomere length leading to cell immortalization. Other cellular targets including BAK1, Fas-associated death domain-containing protein (FADD) and procaspase 8, are degraded by E6/E6AP causing inhibition of apoptosis. E6 also inhibits immune response by interacting with host IRF3 and TYK2. These interactions prevent IRF3 transcriptional activities and inhibit TYK2-mediated JAK-STAT activation by interferon alpha resulting in inhibition of the interferon signaling pathway. This is Protein E6 from Homo sapiens (Human).